Consider the following 99-residue polypeptide: Large ribosomal subunit protein eL21 (99 aa).

It belongs to the eukaryotic ribosomal protein eL21 family.

The sequence is that of Large ribosomal subunit protein eL21 from Staphylothermus marinus (strain ATCC 43588 / DSM 3639 / JCM 9404 / F1).